The following is a 439-amino-acid chain: GTPase Der (439 aa).

2 consecutive EngA-type G domains span residues 4–166 and 175–350; these read PIVA…PAQD and IRIA…EEAS. Residues 10 to 17, 57 to 61, 119 to 122, 181 to 188, 228 to 232, and 293 to 296 each bind GTP; these read GRPNVGKS, DTGGL, NKVE, DTAGM, and NKWD. The 85-residue stretch at 351 to 435 folds into the KH-like domain; it reads KRVATADLNN…PIRFFLRKRE (85 aa).

This sequence belongs to the TRAFAC class TrmE-Era-EngA-EngB-Septin-like GTPase superfamily. EngA (Der) GTPase family. In terms of assembly, associates with the 50S ribosomal subunit.

GTPase that plays an essential role in the late steps of ribosome biogenesis. The polypeptide is GTPase Der (Desulforamulus reducens (strain ATCC BAA-1160 / DSM 100696 / MI-1) (Desulfotomaculum reducens)).